Reading from the N-terminus, the 1058-residue chain is Leucine--tRNA ligase, cytoplasmic (1058 aa).

A 'HIGH' region motif is present at residues 48-58 (PYMNGRLHVGH). The short motif at 711–715 (KMSKS) is the 'KMSKS' region element. Residue Lys714 coordinates ATP.

This sequence belongs to the class-I aminoacyl-tRNA synthetase family.

It is found in the cytoplasm. The catalysed reaction is tRNA(Leu) + L-leucine + ATP = L-leucyl-tRNA(Leu) + AMP + diphosphate. This chain is Leucine--tRNA ligase, cytoplasmic (leuS), found in Dictyostelium discoideum (Social amoeba).